The primary structure comprises 347 residues: NADH-ubiquinone oxidoreductase chain 2 (347 aa).

The next 11 helical transmembrane spans lie at 1 to 21, 25 to 45, 55 to 75, 96 to 116, 123 to 143, 145 to 165, 178 to 198, 200 to 220, 237 to 257, 274 to 294, and 324 to 344; these read MNPL…LITA, HWFL…PVLT, AAIK…MAIL, TMML…FWVP, TLMS…SIMY, IFPV…IMVG, ILAY…PYNP, ITIF…LALN, LTWL…LPPL, GTLI…YFYM, and FLLP…PLTF.

This sequence belongs to the complex I subunit 2 family. As to quaternary structure, core subunit of respiratory chain NADH dehydrogenase (Complex I) which is composed of 45 different subunits. Interacts with TMEM242.

It localises to the mitochondrion inner membrane. It catalyses the reaction a ubiquinone + NADH + 5 H(+)(in) = a ubiquinol + NAD(+) + 4 H(+)(out). Functionally, core subunit of the mitochondrial membrane respiratory chain NADH dehydrogenase (Complex I) which catalyzes electron transfer from NADH through the respiratory chain, using ubiquinone as an electron acceptor. Essential for the catalytic activity and assembly of complex I. The sequence is that of NADH-ubiquinone oxidoreductase chain 2 from Hylobates lar (Lar gibbon).